A 250-amino-acid polypeptide reads, in one-letter code: Alpha/beta hydrolase nvfD (250 aa).

Active-site charge relay system residues include D198 and H226.

It belongs to the AB hydrolase superfamily.

It functions in the pathway secondary metabolite biosynthesis; terpenoid biosynthesis. In terms of biological role, alpha/beta hydrolase; part of the gene cluster that mediates the biosynthesis of novofumigatonin, a heavily oxygenated meroterpenoid containing a unique orthoester moiety. The first step of the pathway is the synthesis of 3,5-dimethylorsellinic acid (DMOA) by the polyketide synthase nvfA via condensation of one acetyl-CoA starter unit with 3 malonyl-CoA units and 2 methylations. DMOA is then converted to farnesyl-DMOA by the farnesyltransferase nvfB. Epoxydation by FAD-dependent monooxygenase nvfK, followed by a protonation-initiated cyclization catalyzed by the terpene cyclase nvfL leads to the production of asnavolin H. The short chain dehydrogenase nvfC then as a 3-OH dehydrogenase of asnovolin H to yield chemesin D. There are two branches to synthesize asnovolin A from chemesin D. In one branch, chemesin D undergoes Baeyer-Villiger oxidation by nvfH, methylation by nvfJ, and enoyl reduction by the nvfM D enoylreductase that reduces the double bond between C-5'and C-6', to form respectively asnovolin I, asnovolin K, and asnovolin A. In the other branch, the methylation precedes the Baeyer-Villiger oxidation and the enoyl reduction to yield asnovolin A via the asnovolin J intermediate. Asnovolin A is further converted to fumigatonoid A by the Fe(II)/2-oxoglutarate-dependent dioxygenase nvfI that catalyzes an endoperoxidation reaction. The alpha/beta hydrolase nvfD then acts as an epimerase that converts fumigatonoid A to its C-5' epimer, which then undergoes spontaneous or nvfD-catalyzed lactonization. The following step utilizes the ketoreductase nvfG to produce fumigatonoid B. The dioxygenase nvfE further converts fumigatonoid B into fumigatonoid C. Finally the Fe(II)/2-oxoglutarate-dependent dioxygenase nvfF catalyzes two rounds of oxidation to transform fumigatonoid C into the end product, novofumigatonin A. In Aspergillus novofumigatus (strain IBT 16806), this protein is Alpha/beta hydrolase nvfD.